We begin with the raw amino-acid sequence, 1305 residues long: Serine protease EspC (1305 aa).

The first 53 residues, 1–53 (MNKIYALKYCHATGGLIAVSELASRVMKKAARGSLLALFNLSLYGAFLSASQA), serve as a signal peptide directing secretion. Residues 55–297 (QLNIDNVWAR…SILNQYDENT (243 aa)) enclose the Peptidase S6 domain. Residues His125, Asp153, and Ser256 each act as charge relay system in the active site. The 267-residue stretch at 1039-1305 (DTQGDAGVWA…AINANFRYSF (267 aa)) folds into the Autotransporter domain.

In terms of processing, cleaved to release the mature protein from the outer membrane.

The protein localises to the periplasm. It is found in the secreted. The protein resides in the cell surface. It localises to the cell outer membrane. With respect to regulation, inhibition of cytotoxic activity by phenylmethylsulfonyl fluoride. Serine protease with enterotoxic and cytotoxic activities. Cleaves fodrin, but does not cause its redistribution within epithelial cells. The exact role of EspC in EPEC pathogenesis is still unknown. The polypeptide is Serine protease EspC (espC) (Escherichia coli O127:H6 (strain E2348/69 / EPEC)).